The following is a 295-amino-acid chain: Microcin B17-processing protein McbB (295 aa).

Its subcellular location is the cytoplasm. Necessary to process the inactive microcin B17 (McbA) precursor into the active peptide. This Escherichia coli protein is Microcin B17-processing protein McbB (mcbB).